A 255-amino-acid chain; its full sequence is 4-hydroxy-tetrahydrodipicolinate reductase (255 aa).

Residues 9 to 14, D35, 89 to 91, and 115 to 118 contribute to the NAD(+) site; these read GFKGKM, GTT, and APNF. H145 functions as the Proton donor/acceptor in the catalytic mechanism. (S)-2,3,4,5-tetrahydrodipicolinate is bound at residue H146. Catalysis depends on K149, which acts as the Proton donor. Residue 155–156 coordinates (S)-2,3,4,5-tetrahydrodipicolinate; sequence GT.

It belongs to the DapB family.

The protein resides in the cytoplasm. The catalysed reaction is (S)-2,3,4,5-tetrahydrodipicolinate + NAD(+) + H2O = (2S,4S)-4-hydroxy-2,3,4,5-tetrahydrodipicolinate + NADH + H(+). It catalyses the reaction (S)-2,3,4,5-tetrahydrodipicolinate + NADP(+) + H2O = (2S,4S)-4-hydroxy-2,3,4,5-tetrahydrodipicolinate + NADPH + H(+). Its pathway is amino-acid biosynthesis; L-lysine biosynthesis via DAP pathway; (S)-tetrahydrodipicolinate from L-aspartate: step 4/4. In terms of biological role, catalyzes the conversion of 4-hydroxy-tetrahydrodipicolinate (HTPA) to tetrahydrodipicolinate. This chain is 4-hydroxy-tetrahydrodipicolinate reductase, found in Streptococcus pneumoniae (strain P1031).